The chain runs to 300 residues: Arrestin domain-containing protein 4 (300 aa).

2 consecutive short sequence motifs (PPxY motif) follow at residues 231-234 and 276-279; these read PPNY and PPLY.

This sequence belongs to the arrestin family. In terms of assembly, interacts with ADRB2. Interacts (via PPxY motifs) with ITCH, NEDD4L and WWP2. Interacts with AVPR2. Identified in a complex containing at least ARRDC4, AVPR2 and HGS. Interacts with SLC11A2; controls the incorporation of SLC11A2 into extracellular vesicles through an ubiquitination-dependent mechanism. Interacts with TRIM65.

The protein localises to the early endosome. It is found in the cell membrane. Its subcellular location is the cytoplasmic vesicle. Functionally, functions as an adapter recruiting ubiquitin-protein ligases to their specific substrates. Plays a role in endocytosis of activated G protein-coupled receptors (GPCRs) Through an ubiquitination-dependent mechanism also plays a role in the incorporation of SLC11A2 into extracellular vesicles. May play a role in glucose uptake. Participates in innate immune response by promoting IFIH1/MDA5 activation through interaction with TRIM65. The polypeptide is Arrestin domain-containing protein 4 (Arrdc4) (Rattus norvegicus (Rat)).